The primary structure comprises 81 residues: Putative defensin-like protein 188 (81 aa).

A signal peptide spans 1 to 19; the sequence is MKNSSLLFILIVVFVISSS. Cystine bridges form between C31–C81, C37–C57, C43–C75, and C47–C77.

This sequence belongs to the DEFL family.

It is found in the secreted. The chain is Putative defensin-like protein 188 (LCR41) from Arabidopsis thaliana (Mouse-ear cress).